Consider the following 633-residue polypeptide: 1-deoxy-D-xylulose-5-phosphate synthase (633 aa).

Thiamine diphosphate contacts are provided by residues histidine 72 and 113 to 115 (GHS). Aspartate 144 is a binding site for Mg(2+). Residues 145–146 (GA), asparagine 173, tyrosine 284, and glutamate 367 contribute to the thiamine diphosphate site. Asparagine 173 provides a ligand contact to Mg(2+).

This sequence belongs to the transketolase family. DXPS subfamily. As to quaternary structure, homodimer. Mg(2+) is required as a cofactor. The cofactor is thiamine diphosphate.

It catalyses the reaction D-glyceraldehyde 3-phosphate + pyruvate + H(+) = 1-deoxy-D-xylulose 5-phosphate + CO2. It participates in metabolic intermediate biosynthesis; 1-deoxy-D-xylulose 5-phosphate biosynthesis; 1-deoxy-D-xylulose 5-phosphate from D-glyceraldehyde 3-phosphate and pyruvate: step 1/1. Catalyzes the acyloin condensation reaction between C atoms 2 and 3 of pyruvate and glyceraldehyde 3-phosphate to yield 1-deoxy-D-xylulose-5-phosphate (DXP). The sequence is that of 1-deoxy-D-xylulose-5-phosphate synthase from Bacillus licheniformis (strain ATCC 14580 / DSM 13 / JCM 2505 / CCUG 7422 / NBRC 12200 / NCIMB 9375 / NCTC 10341 / NRRL NRS-1264 / Gibson 46).